We begin with the raw amino-acid sequence, 524 residues long: Nif-specific regulatory protein (524 aa).

An a domain region spans residues 1–182; it reads MIHKSDSDTT…AQTIRLMILP (182 aa). In terms of domain architecture, GAF spans 35-176; the sequence is EASKTLQEVL…TVANLIAQTI (142 aa). One can recognise a Sigma-54 factor interaction domain in the interval 212 to 481; that stretch reads MVGKSPAMRQ…DGWLDNSLDE (270 aa). Residues 240-247 and 303-312 each bind ATP; these read GESGTGKE and ADGGTLFLDE. The tract at residues 482-524 is C-terminal DNA-binding domain; sequence RQRLIAALEKAGWVQAKAARLLGMTPRQVAYRIQIMDITMPRL. The H-T-H motif DNA-binding region spans 496 to 515; sequence QAKAARLLGMTPRQVAYRIQ.

As to quaternary structure, interacts with sigma-54.

Its function is as follows. Required for activation of most nif operons, which are directly involved in nitrogen fixation. This chain is Nif-specific regulatory protein (nifA), found in Klebsiella oxytoca.